Reading from the N-terminus, the 1249-residue chain is Apoptotic protease-activating factor 1 (1249 aa).

The CARD domain maps to 1–90 (MDAKARNCLL…KDLAGLLHSG (90 aa)). One can recognise an NB-ARC domain in the interval 106-415 (NTSFVRTVLC…LETEEVEDIL (310 aa)). Residues 154–161 (GMAGCGKS) and Arg-265 contribute to the ATP site. Residues 613-652 (PHTDAVYHACFSQDGQRIASCGADKTLQVFKAETGEKLLD) form a WD 1-1 repeat. One copy of the WD 1-2 repeat lies at 655–694 (AHEDEVLCCAFSSDDSYIATCSVDKKVKIWDSGTGKLVHT). The stretch at 697 to 738 (EHSEQVNCCHFTNKSNHLLLATGSNDSFLKLWDLNQKECRNT) is one WD 1-3 repeat. The WD 1-4 repeat unit spans residues 741–780 (GHTNSVTHCRFSPDDELLASCSADGTLKLWDVRSANEKKS). The WD 1-5 repeat unit spans residues 796–837 (DVEVIVKCCSWSADGDRIIVAAKNKVLLLDIHTSGLLTEIHT). The stretch at 838-877 (GHHSTIQYCDFSPYDHLAVIALSQYCVELWNIDSRVKVAD) is one WD 1-6 repeat. The stretch at 880–910 (GHLSWVHGVMFSPDGSSFLTASDDQTIRVWE) is one WD 1-7 repeat. The tract at residues 910-921 (ETRKVCKNSAIV) is interpropeller linker. Residues 922–958 (LKQEIDVVFQENEMMVLAVDNIRGLQLIAGKTGQIDY) form a WD 2-1 repeat. A WD 2-2 repeat occupies 959 to 998 (LPEAQVSCCCLSPHLEYVAFGDEEGAIKIIELPNNRVFSS). Residues 1001 to 1040 (GHKKAVRHIQFTADGKTLISSSEDSVIQVWNWQTEEYVFL) form a WD 2-3 repeat. A WD 2-4 repeat occupies 1042-1080 (AHQETVKDFRLLRDSRLLSWSFDGTVKVWNVITGRIERD). The WD 2-5 repeat unit spans residues 1083 to 1122 (CHQGTVLSCAISSDATKFSSTSADKTAKIWSFELPSPLHE). The WD 2-6 repeat unit spans residues 1125–1164 (GHNSCVRCSAFSLDGILLATGDDNGEIRIWNVSDGQLLHL). Residues 1176 to 1213 (THGGWVTDVCFSPDRKMLVSAGGYLKWWNVVTGESSQT) form a WD 2-7 repeat. The stretch at 1214-1249 (FYTNGTNLKKIHVSPDFRTYVTVDNLGILYILQVLE) is one WD 2-8 repeat.

Monomer. Oligomerizes to a heptameric ring, known as the apoptosome, upon binding of cytochrome c and dATP. Oligomeric Apaf-1 and pro-caspase-9 bind to each other via their respective NH2-terminal CARD domains. Interacts with UACA. Interacts with APIP. Interacts (via CARD and NACHT domains) with NAIP/BIRC1 (via NACHT domain). Interacts with CIAO2A.

The protein resides in the cytoplasm. Regulates programmed cell death; necessary for normal brain development. Participates with pro-caspase-9 (Apaf-3) in the cytochrome c-dependent activation of caspase-3, leading to apoptosis. This activation requires ATP. The sequence is that of Apoptotic protease-activating factor 1 (Apaf1) from Rattus norvegicus (Rat).